The chain runs to 439 residues: Magnesium-dependent glutamate N-prenyltransferase (439 aa).

Mg(2+) contacts are provided by asparagine 322, threonine 326, glutamate 330, and phenylalanine 337.

Belongs to the terpene synthase family. The cofactor is Mg(2+).

The catalysed reaction is dimethylallyl diphosphate + L-glutamate = prekainate + diphosphate. It participates in secondary metabolite biosynthesis. Magnesium-dependent glutamate N-prenyltransferase: part of the gene cluster that mediates the biosynthesis of kainic acid (KA) and derivatives, natural products with neurochemical activity acting as ionotropic glutamate receptor (iGluR) agonists, thus being neurotoxins. Catalyzes the conversion of L-glutamic acid (L-Glu) to prekainic acid in the presence of dimethylallyl diphosphate (DMAPP). Can also use geranyl diphosphate (GPP) as substrate, thus leading to the formation of N-geranyl-L-glutamic acid (L-NGG). The polypeptide is Magnesium-dependent glutamate N-prenyltransferase (Digenea simplex (Marine red alga)).